The following is a 90-amino-acid chain: Acylphosphatase (90 aa).

The Acylphosphatase-like domain maps to 5 to 90 (SFVVRVWGLV…PPKGSGFHTN (86 aa)). Catalysis depends on residues R20 and N38.

The protein belongs to the acylphosphatase family.

It carries out the reaction an acyl phosphate + H2O = a carboxylate + phosphate + H(+). This chain is Acylphosphatase (acyP), found in Aeromonas hydrophila subsp. hydrophila (strain ATCC 7966 / DSM 30187 / BCRC 13018 / CCUG 14551 / JCM 1027 / KCTC 2358 / NCIMB 9240 / NCTC 8049).